The sequence spans 187 residues: Tetratricopeptide repeat protein 36 (187 aa).

TPR repeat units follow at residues 47 to 80, 82 to 114, and 119 to 152; these read VKDL…LPQR, SAYN…SNGK, and CQAL…GSEF.

It belongs to the TTC36 family.

The chain is Tetratricopeptide repeat protein 36 (ttc36) from Danio rerio (Zebrafish).